The primary structure comprises 442 residues: Protein UNUSUAL FLORAL ORGANS (442 aa).

The tract at residues 1-85 (MDSTVFINNP…RFYSLLFSNT (85 aa)) is interaction with SKP1A. The F-box domain maps to 44–90 (GRIWSKLPPPLLDRVIAFLPPPAFFRTRCVCKRFYSLLFSNTFLETY).

As to quaternary structure, part of a putative SCF (ASK/Cullin/F-box) ubiquitin ligase complex. Interacts with SKP1A/ASK1, SKP1B/ASK2 and ASK11.

The protein resides in the nucleus. It participates in protein modification; protein ubiquitination. Functionally, component of SCF(ASK-cullin-F-box) E3 ubiquitin ligase complexes, which may mediate the ubiquitination and subsequent proteasomal degradation of target proteins. Considered as a meristem identity factor required for normal growth of the young floral meristem. Acts together with LEAFY to positively regulate the B class floral homeotic genes APETALA3 and PISTILLATA. In this way, operates as a region-specific regulator for petal and stamen development. Alternatively, may play a role as a negative regulator of the C class floral homeotic genes. Interacts together with the SKP1-like protein ASK1 to form a ubiquitin E3 ligase complex and could indirectly promote the ubiquitination and degradation of specific proteins controlling the floral primordia development like repressors of B class floral homeotic genes. The sequence is that of Protein UNUSUAL FLORAL ORGANS (UFO) from Arabidopsis thaliana (Mouse-ear cress).